The chain runs to 285 residues: UPF0603 protein At1g54780, chloroplastic (285 aa).

Disordered stretches follow at residues 1 to 48 and 228 to 251; these read METL…LSTR and GQPD…TKEE. The segment covering 22–40 has biased composition (polar residues); the sequence is HQTKPTSHSLSLSKPTTFS. Over residues 238-251 the composition is skewed to basic and acidic residues; the sequence is KDSKRESNFKTKEE. Residues 259–279 traverse the membrane as a helical segment; the sequence is FSLVVGGLLVIAFVVPMAQYF.

Belongs to the UPF0603 family.

The protein localises to the plastid. It is found in the chloroplast thylakoid membrane. The sequence is that of UPF0603 protein At1g54780, chloroplastic from Arabidopsis thaliana (Mouse-ear cress).